Consider the following 87-residue polypeptide: Small ribosomal subunit protein bS20 (87 aa).

Residues 1–29 (MANTAQARKRARQAVKQNAHNSSQRSTLR) are disordered. A compositionally biased stretch (polar residues) spans 20–29 (HNSSQRSTLR).

It belongs to the bacterial ribosomal protein bS20 family.

Its function is as follows. Binds directly to 16S ribosomal RNA. This chain is Small ribosomal subunit protein bS20, found in Janthinobacterium sp. (strain Marseille) (Minibacterium massiliensis).